The following is a 182-amino-acid chain: UPF0200 protein Mboo_1593 (182 aa).

8-15 (GLPASGKG) contributes to the ATP binding site.

Belongs to the UPF0200 family.

In Methanoregula boonei (strain DSM 21154 / JCM 14090 / 6A8), this protein is UPF0200 protein Mboo_1593.